The sequence spans 40 residues: MKVRNSLSALKKVPGAQIVRRRGRTFVINKLNPRMKARQG.

Belongs to the bacterial ribosomal protein bL36 family.

The polypeptide is Large ribosomal subunit protein bL36A (Renibacterium salmoninarum (strain ATCC 33209 / DSM 20767 / JCM 11484 / NBRC 15589 / NCIMB 2235)).